A 188-amino-acid polypeptide reads, in one-letter code: ATP synthase subunit b 1 (188 aa).

The chain crosses the membrane as a helical span at residues 35–55; it reads VHFSSHFFWLAISFGFFYLFI.

The protein belongs to the ATPase B chain family. As to quaternary structure, F-type ATPases have 2 components, F(1) - the catalytic core - and F(0) - the membrane proton channel. F(1) has five subunits: alpha(3), beta(3), gamma(1), delta(1), epsilon(1). F(0) has three main subunits: a(1), b(2) and c(10-14). The alpha and beta chains form an alternating ring which encloses part of the gamma chain. F(1) is attached to F(0) by a central stalk formed by the gamma and epsilon chains, while a peripheral stalk is formed by the delta and b chains.

Its subcellular location is the cell inner membrane. In terms of biological role, f(1)F(0) ATP synthase produces ATP from ADP in the presence of a proton or sodium gradient. F-type ATPases consist of two structural domains, F(1) containing the extramembraneous catalytic core and F(0) containing the membrane proton channel, linked together by a central stalk and a peripheral stalk. During catalysis, ATP synthesis in the catalytic domain of F(1) is coupled via a rotary mechanism of the central stalk subunits to proton translocation. Functionally, component of the F(0) channel, it forms part of the peripheral stalk, linking F(1) to F(0). The chain is ATP synthase subunit b 1 from Bartonella tribocorum (strain CIP 105476 / IBS 506).